Reading from the N-terminus, the 154-residue chain is Ribonuclease H (154 aa).

The 142-residue stretch at 1–142 folds into the RNase H type-1 domain; that stretch reads MTKQVEIFTD…CDELARQGAN (142 aa). D10, E48, D70, and D134 together coordinate Mg(2+).

Belongs to the RNase H family. In terms of assembly, monomer. Mg(2+) is required as a cofactor.

It is found in the cytoplasm. The catalysed reaction is Endonucleolytic cleavage to 5'-phosphomonoester.. In terms of biological role, endonuclease that specifically degrades the RNA of RNA-DNA hybrids. This is Ribonuclease H from Yersinia pestis bv. Antiqua (strain Antiqua).